Reading from the N-terminus, the 310-residue chain is MKHIHIIDSHTGGEPTRVVVSGFPALGGGTMAERLAVLAREHDRYRAACILEPRGSDVLVGALLCEPVSAGAAAGVIFFNNAGYLGMCGHGTIGLVRTLHHMGRIGPGVHRIETPVGDVEATLHDDLSVSVRNVLAYRHAKDVVVDVPGHGAVTGDVAWGGNWFFLVSDHGQRVAGENVAALAAYASAVRAALERAGVTGRDGAPIDHIELFADDPEYDSRSFVLCPGHAYDRSPCGTGTSAKLACLAADGKLAAGVTWRQASVIGSVFSASYAAAEGGVVPTIRGSAHLSAEATLVIEDDDPFGWGIAS.

Cysteine 88 acts as the Proton acceptor in catalysis. Residues 89–90 (GH), histidine 208, and aspartate 232 each bind substrate. The Proton donor role is filled by cysteine 236. 237–238 (GT) provides a ligand contact to substrate.

It belongs to the proline racemase family. In terms of assembly, homodimer.

It carries out the reaction trans-4-hydroxy-L-proline = cis-4-hydroxy-D-proline. Its activity is regulated as follows. Inhibited by iodoacetate, iodoacetamide and by high amounts (10 mM) of pyrrole-2-carboxylic acid (PYC). Not inhibited by PYC at 1 mM. Functionally, allows intracellular utilization of 4-hydroxyproline, one of the major constituents of host collagen, by converting 4-hydroxy-L-proline to 4-hydroxy-D-proline, which can be further metabolized by intracellular 4-hydroxy-D-proline oxidases. In Burkholderia pseudomallei (strain K96243), this protein is 4-hydroxyproline epimerase.